The sequence spans 855 residues: Potassium transporter 13 (855 aa).

Residues 1 to 67 form a disordered region; that stretch reads MFHVEEESSG…EMDSDEEDDN (67 aa). Topologically, residues 1 to 105 are cytoplasmic; it reads MFHVEEESSG…EIEDTGIGKK (105 aa). A compositionally biased stretch (acidic residues) spans 36–51; that stretch reads EKDDYEVNEDYDDDGY. Residues 106 to 126 traverse the membrane as a helical segment; the sequence is LILALQTLGVVFGDIGTSPLY. Over 127–142 the chain is Extracellular; sequence TFTVMFRRSPINDKED. Residues 143 to 163 form a helical membrane-spanning segment; the sequence is IIGALSLVIYTLILIPLVKYV. The Cytoplasmic portion of the chain corresponds to 164 to 233; that stretch reads HFVLWANDDG…RLEASMALKK (70 aa). A helical transmembrane segment spans residues 234-254; the sequence is LLLILVLAGTAMVIADAVVTP. At 255–268 the chain is on the extracellular side; that stretch reads AMSVMSAIGGLKVG. The helical transmembrane segment at 269–289 threads the bilayer; sequence VGVIEQDQVVVISVSFLVILF. Residues 290–298 are Cytoplasmic-facing; sequence SVQKYGTSK. Residues 299-319 traverse the membrane as a helical segment; the sequence is LGLVLGPALLLWFFCLAGIGI. Residues 320–346 lie on the Extracellular side of the membrane; the sequence is YNLVKYDSSVFKAFNPAYIYFFFKRNS. The helical transmembrane segment at 347-367 threads the bilayer; it reads VNAWYALGGCVLCATGSEAMF. The Cytoplasmic segment spans residues 368–379; it reads ADLSYFSVHSIQ. A helical membrane pass occupies residues 380–400; sequence LTFILLVLPCLLLGYLGQAAY. Residues 401–415 lie on the Extracellular side of the membrane; that stretch reads LSENFSAAGDAFFSS. Asn404 is a glycosylation site (N-linked (GlcNAc...) asparagine). The helical transmembrane segment at 416–436 threads the bilayer; it reads VPSSLFWPVFLISNVAALIAS. Over 437 to 467 the chain is Cytoplasmic; it reads RAMTTATFTCIKQSIALGCFPRLKIIHTSKK. A helical membrane pass occupies residues 468–488; it reads FIGQIYIPVLNWSLLVVCLIV. Residues 489 to 503 are Extracellular-facing; sequence VCSTSNIFAIGNAYG. Residues 504–524 form a helical membrane-spanning segment; it reads IAELGIMMTTTILVTLIMLLI. The Cytoplasmic portion of the chain corresponds to 525 to 528; that stretch reads WQTN. Residues 529-549 traverse the membrane as a helical segment; that stretch reads IIVVSMFAIVSLIVELVFFSS. Over 550–553 the chain is Extracellular; sequence VCSS. A helical membrane pass occupies residues 554 to 574; sequence VADGSWIILVFATIMFLIMFV. Over 575-855 the chain is Cytoplasmic; sequence WNYGSKLKYE…LMQVGMTYMV (281 aa). A Phosphoserine modification is found at Ser766.

This sequence belongs to the HAK/KUP transporter (TC 2.A.72.3) family.

It is found in the cell membrane. Functionally, probable potassium transporter. The polypeptide is Potassium transporter 13 (POT13) (Arabidopsis thaliana (Mouse-ear cress)).